A 293-amino-acid polypeptide reads, in one-letter code: 4-diphosphocytidyl-2-C-methyl-D-erythritol kinase (293 aa).

The active site involves Lys-16. 99 to 109 (PMGAGLGGGSS) provides a ligand contact to ATP. Residue Asp-141 is part of the active site.

It belongs to the GHMP kinase family. IspE subfamily.

It carries out the reaction 4-CDP-2-C-methyl-D-erythritol + ATP = 4-CDP-2-C-methyl-D-erythritol 2-phosphate + ADP + H(+). It participates in isoprenoid biosynthesis; isopentenyl diphosphate biosynthesis via DXP pathway; isopentenyl diphosphate from 1-deoxy-D-xylulose 5-phosphate: step 3/6. In terms of biological role, catalyzes the phosphorylation of the position 2 hydroxy group of 4-diphosphocytidyl-2C-methyl-D-erythritol. The chain is 4-diphosphocytidyl-2-C-methyl-D-erythritol kinase from Burkholderia ambifaria (strain MC40-6).